Consider the following 945-residue polypeptide: LPS-assembly protein LptD (945 aa).

Residues 1-33 (MALKSPAFRKKFPLLVTGSLLALQPLATSFVVA) form the signal peptide. The disordered stretch occupies residues 56–98 (AQLPPRPVHDANSVSSSVATAADATGEEASGDKSKLVTEAKGR). The segment covering 65–79 (DANSVSSSVATAADA) has biased composition (low complexity). Over residues 85–98 (SGDKSKLVTEAKGR) the composition is skewed to basic and acidic residues.

The protein belongs to the LptD family. In terms of assembly, component of the lipopolysaccharide transport and assembly complex. Interacts with LptE and LptA.

The protein localises to the cell outer membrane. Its function is as follows. Together with LptE, is involved in the assembly of lipopolysaccharide (LPS) at the surface of the outer membrane. The chain is LPS-assembly protein LptD from Pseudomonas fluorescens (strain ATCC BAA-477 / NRRL B-23932 / Pf-5).